The sequence spans 160 residues: Globin CTT-II beta (160 aa).

An N-terminal signal peptide occupies residues 1-15; it reads MKFLVLALCIAAAVA. Residues 17-160 form the Globin domain; the sequence is PLSADEASLV…NVFNMMFSYL (144 aa). Heme b contacts are provided by histidine 75 and histidine 110.

This sequence belongs to the globin family. As to quaternary structure, homodimer.

The sequence is that of Globin CTT-II beta from Chironomus thummi thummi (Midge).